The chain runs to 575 residues: Manganese transporter SMF1 (575 aa).

Residues 1–70 (MVNVGPSHAA…TYVSKRQVMR (70 aa)) are Extracellular-facing. Ser-24 is modified (phosphoserine). Glycyl lysine isopeptide (Lys-Gly) (interchain with G-Cter in ubiquitin) cross-links involve residues Lys-33 and Lys-34. The chain crosses the membrane as a helical span at residues 71–91 (DIFAKYLKFIGPGLMVSVAYI). Residues 92-108 (DPGNYSTAVDAGASNQF) are Cytoplasmic-facing. A helical transmembrane segment spans residues 109 to 129 (SLLCIILLSNFIAIFLQCLCI). Residues 130–156 (KLGSVTGLDLSRACREYLPRWLNWTLY) lie on the Extracellular side of the membrane. A helical transmembrane segment spans residues 157-177 (FFAECAVIATDIAEVIGTAIA). At 178–179 (LN) the chain is on the cytoplasmic side. Residues 180 to 200 (ILIKVPLPAGVAITVVDVFLI) traverse the membrane as a helical segment. Over 201 to 218 (MFTYKPGASSIRFIRIFE) the chain is Extracellular. A helical membrane pass occupies residues 219 to 239 (CFVAVLVVGVCICFAIELAYI). The Cytoplasmic segment spans residues 240–266 (PKSTSVKQVFRGFVPSAQMFDHNGIYT). A helical transmembrane segment spans residues 267-287 (AISILGATVMPHSLFLGSALV). At 288–344 (QPRLLDYDVKHGNYTVSEEQDKVKKSKSTEEIMEEKYFNYRPTNAAIKYCMKYSMVE) the chain is on the extracellular side. A helical transmembrane segment spans residues 345–365 (LSITLFTLALFVNCAILVVAG). Residues 366-396 (STLYNSPEADGADLFTIHELLSRNLAPAAGT) lie on the Cytoplasmic side of the membrane. The helical transmembrane segment at 397–417 (IFMLALLLSGQSAGVVCTMSG) threads the bilayer. At 418–463 (QIVSEGHINWKLQPWQRRLATRCISIIPCLVISICIGREALSKALN) the chain is on the extracellular side. A helical membrane pass occupies residues 464-484 (ASQVVLSIVLPFLVAPLIFFT). At 485–543 (CKKSIMKTEITVDHTEEDSHNHQNNNDRSAGSVIEQDGSSGMEIENGKDVKIVYMANNW) the chain is on the cytoplasmic side. The segment at 498-517 (HTEEDSHNHQNNNDRSAGSV) is disordered. A helical membrane pass occupies residues 544-564 (IITVIAIIVWLFLSLLNVYAI). At 565 to 575 (VQLGMSHGDIS) the chain is on the extracellular side.

The protein belongs to the NRAMP family.

Its subcellular location is the cell membrane. The enzyme catalyses Mn(2+)(in) = Mn(2+)(out). High-affinity manganese transporter involved in manganese uptake from the extracellular environment. Also contributes to cellular accumulation of other divalent metal ions such as cadmium, cobalt, copper, iron and nickel. This is Manganese transporter SMF1 (SMF1) from Saccharomyces cerevisiae (strain ATCC 204508 / S288c) (Baker's yeast).